Reading from the N-terminus, the 720-residue chain is Nucleolar protein 11 (720 aa).

The disordered stretch occupies residues 365 to 392 (KDPETKPSNAGAQKKTRERKTNANAGNG).

Its subcellular location is the nucleus. It is found in the nucleolus. Ribosome biogenesis factor. May be required for both optimal rDNA transcription and pre-rRNA processing. This chain is Nucleolar protein 11 (nol11), found in Xenopus laevis (African clawed frog).